Reading from the N-terminus, the 103-residue chain is Large ribosomal subunit protein bL21 (103 aa).

The protein belongs to the bacterial ribosomal protein bL21 family. In terms of assembly, part of the 50S ribosomal subunit. Contacts protein L20.

This protein binds to 23S rRNA in the presence of protein L20. The protein is Large ribosomal subunit protein bL21 of Alteromonas mediterranea (strain DSM 17117 / CIP 110805 / LMG 28347 / Deep ecotype).